Reading from the N-terminus, the 591-residue chain is MNELIKYKLELLPDSPGCYLHKDKHGTIIYVGKAKNLRNRVRSYFRGSHDTKTEMLVSEIEDFEFIVTGSNTEALLLEINLIQKNMPKYNIKLKDDKSYPFIKITNEPFPRLLITRQIKKQDGLYFGPYPDSYTANEVKKLLDRIFPFKKCKNPINKVCFYYHLGQCNAHSICQTDKAYWDGLVEDVKLFLTGKDDKIVTGLKEKMLAASQAMEFERAAEYRDLISGIATLRTKQRIMSKDLQDRDIFGYYVDKGWMCVQVFFVRQGKLIQRDVNMFPYYNEAEEDFLTYIGQFYLDQKHFLPKEVFIPDTIDQDLVQAVVPTKIVKPQRGEKKQLVALATKNARVSLQQKFDLLEKDLRKTKGAIDHLGQLLQIDRPYRIEAFDNSNIQGTSPVAAMVVFKDGKPSKKDYRKFKIKTVTGPDDYASMREVIFRRYSRVLKDKLEMPDLIIIDGGQGQVNVAKDVIENQLGLQIPIAGLQKNDRHQTHELLFGDPLEVVELPRNSEEFFLLHRIQDEVHRFAITFHRQVRSKNSFSSKLDGIEGLGPKRKQALLKHFKNMTAISQASVDEVRSLGIPEKVAQALLDSFNEV.

Residues 14 to 91 (DSPGCYLHKD…IQKNMPKYNI (78 aa)) enclose the GIY-YIG domain. The 36-residue stretch at 196–231 (DKIVTGLKEKMLAASQAMEFERAAEYRDLISGIATL) folds into the UVR domain.

Belongs to the UvrC family. Interacts with UvrB in an incision complex.

It localises to the cytoplasm. In terms of biological role, the UvrABC repair system catalyzes the recognition and processing of DNA lesions. UvrC both incises the 5' and 3' sides of the lesion. The N-terminal half is responsible for the 3' incision and the C-terminal half is responsible for the 5' incision. The chain is UvrABC system protein C from Streptococcus uberis (strain ATCC BAA-854 / 0140J).